Consider the following 160-residue polypeptide: UPF0262 protein Mmar10_1128 (160 aa).

The protein belongs to the UPF0262 family.

This is UPF0262 protein Mmar10_1128 from Maricaulis maris (strain MCS10) (Caulobacter maris).